A 543-amino-acid chain; its full sequence is uncharacterized protein (543 aa).

A PE domain is found at Met1–Ala93. The tract at residues Gly194–Gly214 is disordered.

The protein belongs to the mycobacterial PE family. PGRS subfamily.

This is an uncharacterized protein from Mycobacterium tuberculosis (strain CDC 1551 / Oshkosh).